Consider the following 490-residue polypeptide: Cobyric acid synthase (490 aa).

The region spanning arginine 252–alanine 439 is the GATase cobBQ-type domain. Cysteine 333 functions as the Nucleophile in the catalytic mechanism. Histidine 431 is an active-site residue.

This sequence belongs to the CobB/CobQ family. CobQ subfamily.

It participates in cofactor biosynthesis; adenosylcobalamin biosynthesis. In terms of biological role, catalyzes amidations at positions B, D, E, and G on adenosylcobyrinic A,C-diamide. NH(2) groups are provided by glutamine, and one molecule of ATP is hydrogenolyzed for each amidation. In Pseudomonas aeruginosa (strain LESB58), this protein is Cobyric acid synthase.